The following is a 220-amino-acid chain: Protein ABA DEFICIENT 4, chloroplastic (220 aa).

The N-terminal 37 residues, 1-37 (MGFSSFISQPLSSSLSVMKRNVSAKRSELCLDSSKIR), are a transit peptide targeting the chloroplast. Transmembrane regions (helical) follow at residues 77–97 (IASS…TLMV), 112–132 (SVPY…SWTP), 154–174 (MFSS…VDLF), and 195–215 (SLCL…KAII).

As to expression, expressed in root vasculature, root hairs, leaves, trichomes, sepals, stamens, stigma, pedicels, siliques and embryo.

The protein localises to the plastid. The protein resides in the chloroplast membrane. Required for neoxanthin biosynthesis, an intermediary step in abscisic acid (ABA) biosynthesis. Probably not involved directly in the enzymatic conversion of violaxanthin to neoxanthin. Cannot convert violaxanthin to neoxanthin in vitro. Required for ABA biosynthesis in response to drought stress. Required for neoxanthin biosynthesis which is involved in photoprotection of photosystem II (PSII). Neoxanthin acts as an antioxidant within the photosystem PSII supercomplex. This chain is Protein ABA DEFICIENT 4, chloroplastic, found in Arabidopsis thaliana (Mouse-ear cress).